The following is a 124-amino-acid chain: Ribonuclease pancreatic (124 aa).

Residues 1-13 (KETAAEKFQRQHM) show a composition bias toward basic and acidic residues. The tract at residues 1 to 21 (KETAAEKFQRQHMDTSSSLSN) is disordered. The substrate site is built by lysine 7 and arginine 10. Catalysis depends on histidine 12, which acts as the Proton acceptor. 4 disulfide bridges follow: cysteine 26–cysteine 84, cysteine 40–cysteine 95, cysteine 58–cysteine 110, and cysteine 65–cysteine 72. Residue asparagine 34 is glycosylated (N-linked (GlcNAc...) asparagine). Substrate-binding positions include 41–45 (KPVNT), lysine 66, and arginine 85. Histidine 119 serves as the catalytic Proton donor.

Belongs to the pancreatic ribonuclease family. In terms of assembly, monomer. Interacts with and forms tight 1:1 complexes with RNH1. Dimerization of two such complexes may occur. Interaction with RNH1 inhibits this protein. In terms of tissue distribution, pancreas.

The protein resides in the secreted. It catalyses the reaction an [RNA] containing cytidine + H2O = an [RNA]-3'-cytidine-3'-phosphate + a 5'-hydroxy-ribonucleotide-3'-[RNA].. The enzyme catalyses an [RNA] containing uridine + H2O = an [RNA]-3'-uridine-3'-phosphate + a 5'-hydroxy-ribonucleotide-3'-[RNA].. Functionally, endonuclease that catalyzes the cleavage of RNA on the 3' side of pyrimidine nucleotides. Acts on single-stranded and double-stranded RNA. The protein is Ribonuclease pancreatic (RNASE1) of Hippopotamus amphibius (Hippopotamus).